A 159-amino-acid chain; its full sequence is UPF0756 membrane protein PTH_1668 (159 aa).

A run of 4 helical transmembrane segments spans residues 15 to 37 (ILIT…SSCI), 61 to 81 (LGLV…KLTI), 117 to 137 (PEII…LRGT), and 138 to 158 (PCGP…ASLF).

Belongs to the UPF0756 family.

The protein localises to the cell membrane. The protein is UPF0756 membrane protein PTH_1668 of Pelotomaculum thermopropionicum (strain DSM 13744 / JCM 10971 / SI).